A 381-amino-acid chain; its full sequence is 4-hydroxyphenylpyruvate dioxygenase (381 aa).

VOC domains lie at 22 to 156 (GMDA…LVDR) and 184 to 338 (AIDH…IFTK). The Fe cation site is built by His-187, His-270, and Glu-349.

The protein belongs to the 4HPPD family. Homodimer. Requires Fe cation as cofactor.

The catalysed reaction is 3-(4-hydroxyphenyl)pyruvate + O2 = homogentisate + CO2. It participates in amino-acid degradation; L-phenylalanine degradation; acetoacetate and fumarate from L-phenylalanine: step 3/6. The polypeptide is 4-hydroxyphenylpyruvate dioxygenase (hpd) (Streptomyces avermitilis (strain ATCC 31267 / DSM 46492 / JCM 5070 / NBRC 14893 / NCIMB 12804 / NRRL 8165 / MA-4680)).